The primary structure comprises 44 residues: Somatoliberin (44 aa).

Leu-44 carries the post-translational modification Leucine amide.

The protein belongs to the glucagon family.

Its subcellular location is the secreted. Its function is as follows. GRF is released by the hypothalamus and acts on the adenohypophyse to stimulate the secretion of growth hormone. This chain is Somatoliberin (GHRH), found in Capra hircus (Goat).